Consider the following 650-residue polypeptide: Threonine--tRNA ligase (650 aa).

A TGS domain is found at 1-66; sequence MVQITLPDGS…DQDAKLAIVT (66 aa). A catalytic region spans residues 247-538; sequence DHRKIGRDLD…LIENHAGAMP (292 aa). Residues Cys-338, His-389, and His-515 each contribute to the Zn(2+) site.

This sequence belongs to the class-II aminoacyl-tRNA synthetase family. As to quaternary structure, homodimer. Zn(2+) serves as cofactor.

It is found in the cytoplasm. It carries out the reaction tRNA(Thr) + L-threonine + ATP = L-threonyl-tRNA(Thr) + AMP + diphosphate + H(+). Catalyzes the attachment of threonine to tRNA(Thr) in a two-step reaction: L-threonine is first activated by ATP to form Thr-AMP and then transferred to the acceptor end of tRNA(Thr). Also edits incorrectly charged L-seryl-tRNA(Thr). In Bordetella avium (strain 197N), this protein is Threonine--tRNA ligase.